Here is a 361-residue protein sequence, read N- to C-terminus: Mitogen-activated protein kinase 14 (361 aa).

Positions 32-316 (YVPIKPIGRG…VSDALLHPYM (285 aa)) constitute a Protein kinase domain. Residues 38–46 (IGRGAYGVV) and Lys-61 contribute to the ATP site. Asp-158 acts as the Proton acceptor in catalysis. Thr-188 is subject to Phosphothreonine. The TXY motif lies at 188 to 190 (TEY). Residue Tyr-190 is modified to Phosphotyrosine. At Thr-193 the chain carries Phosphothreonine.

Belongs to the protein kinase superfamily. CMGC Ser/Thr protein kinase family. MAP kinase subfamily. As to quaternary structure, interacts with MKK3. Post-translationally, dually phosphorylated on Thr-188 and Tyr-190, which activates the enzyme.

The enzyme catalyses L-seryl-[protein] + ATP = O-phospho-L-seryl-[protein] + ADP + H(+). It catalyses the reaction L-threonyl-[protein] + ATP = O-phospho-L-threonyl-[protein] + ADP + H(+). Activated by threonine and tyrosine phosphorylation. This Arabidopsis thaliana (Mouse-ear cress) protein is Mitogen-activated protein kinase 14 (MPK14).